We begin with the raw amino-acid sequence, 618 residues long: Proline--tRNA ligase (618 aa).

It belongs to the class-II aminoacyl-tRNA synthetase family. ProS type 1 subfamily. In terms of assembly, homodimer.

The protein localises to the cytoplasm. The catalysed reaction is tRNA(Pro) + L-proline + ATP = L-prolyl-tRNA(Pro) + AMP + diphosphate. Functionally, catalyzes the attachment of proline to tRNA(Pro) in a two-step reaction: proline is first activated by ATP to form Pro-AMP and then transferred to the acceptor end of tRNA(Pro). As ProRS can inadvertently accommodate and process non-cognate amino acids such as alanine and cysteine, to avoid such errors it has two additional distinct editing activities against alanine. One activity is designated as 'pretransfer' editing and involves the tRNA(Pro)-independent hydrolysis of activated Ala-AMP. The other activity is designated 'posttransfer' editing and involves deacylation of mischarged Ala-tRNA(Pro). The misacylated Cys-tRNA(Pro) is not edited by ProRS. This Streptococcus pyogenes serotype M1 protein is Proline--tRNA ligase.